Here is a 468-residue protein sequence, read N- to C-terminus: Cytochrome bd ubiquinol oxidase subunit 1 (468 aa).

9 consecutive transmembrane segments (helical) span residues 15–35, 51–71, 95–115, 124–144, 177–197, 219–239, 331–351, 366–386, and 416–436; these read TLFH…VALM, AKFW…TGIL, LAIE…LWIF, IHAL…FWIL, LWVE…FFIA, LAMI…HMQA, FRIM…GLWL, IMIA…IMTE, and SIIA…FLFI. His-18 is a heme b binding site. Residue His-183 coordinates heme b. Met-334 contributes to the heme b binding site. Positions 448-468 are disordered; it reads HHDVPVSTDPFSQEVYHGISS.

Belongs to the cytochrome ubiquinol oxidase subunit 1 family. Heterodimer of subunits I and II. Heme b serves as cofactor. Requires heme d cis-diol as cofactor.

The protein localises to the cell membrane. It catalyses the reaction 2 a ubiquinol + O2(in) + 4 H(+)(in) = 2 a ubiquinone + 2 H2O(in) + 4 H(+)(out). The protein is Cytochrome bd ubiquinol oxidase subunit 1 (cydA) of Bacillus subtilis (strain 168).